A 218-amino-acid chain; its full sequence is Claudin-5 (218 aa).

At 1-7 (MGSAALE) the chain is on the cytoplasmic side. The helical transmembrane segment at 8–28 (ILGLVLCLVGWVGLILACGLP) threads the bilayer. The Extracellular segment spans residues 29–81 (MWQVTAFLDHNIVTAQTTWKGLWMSCVVQSTGHMQCKVYESVLALSAEVQAAR). The chain crosses the membrane as a helical span at residues 82-102 (ALTVGAVLLALVALFVTLTGA). Over 103–123 (QCTTCVAPGPVKARVALTGGA) the chain is Cytoplasmic. The chain crosses the membrane as a helical span at residues 124-144 (LYAVCGLLALVPLCWFANIVV). Topologically, residues 145–160 (REFYDPTVPVSQKYEL) are extracellular. The helical transmembrane segment at 161 to 181 (GAALYIGWAASALLMCGGGLV) threads the bilayer. At 182–218 (CCGAWVCTGRPEFSFPVKYSAPRRPTANGDYDKKNYV) the chain is on the cytoplasmic side. The interactions with TJP1, TJP2 and TJP3 stretch occupies residues 217-218 (YV).

This sequence belongs to the claudin family. Interacts with MPDZ. Directly interacts with TJP1/ZO-1, TJP2/ZO-2 and TJP3/ZO-3. Widely expressed with highest levels in the lung.

It is found in the cell junction. The protein localises to the tight junction. Its subcellular location is the cell membrane. Its function is as follows. Plays a major role in tight junction-specific obliteration of the intercellular space, through calcium-independent cell-adhesion activity. This is Claudin-5 (Cldn5) from Mus musculus (Mouse).